We begin with the raw amino-acid sequence, 609 residues long: MSRSAAASGGPRRPERHLPPAPCGAPGPPETCRTEPDGAGTMNKLRQSLRRRKPAYVPEASRPHQWQADEDAVRKGTCSFPVRYLGHVEVEESRGMHVCEDAVKKLKAMGRKSVKSVLWVSADGLRVVDDKTKDLLVDQTIEKVSFCAPDRNLDKAFSYICRDGTTRRWICHCFLALKDSGERLSHAVGCAFAACLERKQRREKECGVTAAFDASRTSFAREGSFRLSGGGRPAEREAPDKKKAEAAAAPTVAPGPAQPGHVSPTPATTSPGEKGEAGTPVAAGTTAAAIPRRHAPLEQLVRQGSFRGFPALSQKNSPFKRQLSLRLNELPSTLQRRTDFQVKGTVPEMEPPGAGDSDSINALCTQISSSFASAGAPAPGPPPATTGTSAWGEPSVPPAAAFQPGHKRTPSEAERWLEEVSQVAKAQQQQQQQQQQQQQQQQQQQQAASVAPVPTMPPALQPFPAPVGPFDAAPAQVAVFLPPPHMQPPFVPAYPGLGYPPMPRVPVVGITPSQMVANAFCSAAQLQPQPATLLGKAGAFPPPAIPSAPGSQARPRPNGAPWPPEPAPAPAPELDPFEAQWAALEGKATVEKPSNPFSGDLQKTFEIEL.

5 disordered regions span residues M1–A68, G223–A283, A372–S421, Q434–P464, and A537–L609. Over residues P19–P29 the composition is skewed to pro residues. The region spanning R74–G223 is the PID domain. S224 and S228 each carry phosphoserine. The span at P233 to E245 shows a compositional bias: basic and acidic residues. Residues A246–P259 are compositionally biased toward low complexity. S263 is subject to Phosphoserine. At T279 the chain carries Phosphothreonine. A compositionally biased stretch (basic and acidic residues) spans T409–E418. Position 411 is a phosphoserine (S411). Over residues Q434 to Q446 the composition is skewed to low complexity. Pro residues-rich tracts occupy residues P454–P464 and N558–E573.

As to quaternary structure, interacts (via PTB domain) with MAP3K7IP2 (via C-terminal). Interacts (via C-terminal) with TRAF6 (via TRAF domains). Associates with EPS15 and NOTCH1.

Its subcellular location is the cytoplasm. Functionally, plays a role in the process of neurogenesis. Required throughout embryonic neurogenesis to maintain neural progenitor cells, also called radial glial cells (RGCs), by allowing their daughter cells to choose progenitor over neuronal cell fate. Not required for the proliferation of neural progenitor cells before the onset of embryonic neurogenesis. Also required postnatally in the subventricular zone (SVZ) neurogenesis by regulating SVZ neuroblasts survival and ependymal wall integrity. Negative regulator of NF-kappa-B signaling pathway. The inhibition of NF-kappa-B activation is mediated at least in part, by preventing MAP3K7IP2 to interact with polyubiquitin chains of TRAF6 and RIPK1 and by stimulating the 'Lys-48'-linked polyubiquitination and degradation of TRAF6 in cortical neurons. The polypeptide is Numb-like protein (NUMBL) (Homo sapiens (Human)).